We begin with the raw amino-acid sequence, 278 residues long: MAIRKYKPTTPGRRGSSVSDFAEITRSTPEKSLLRPLTKSGGRNAHGRITTRHRGGGHKRAYRVIDFRRLDKDGIPAKVAHIEYDPNRTANIALLHYVDGEKRYILAPKGVTQGTPIESGPTADIKPGNNLPLRNIPTGTTIHNVELRPGGGAKLARAAGMSIQLLGKEGPYATLRMPSGEIRRVDVRCRATVGEVGNAEQSNINWGKAGRMRWKGRRPTVRGVVMNPVDHPHGGGEGKTSGGRHPVSPWGQPEGRTRKPNRPSDKLIVRRRKTGKKR.

Disordered regions lie at residues 1-20 (MAIR…SVSD), 25-57 (TRST…RGGG), and 224-278 (VVMN…GKKR). Composition is skewed to basic residues over residues 45-57 (AHGR…RGGG) and 269-278 (VRRRKTGKKR).

It belongs to the universal ribosomal protein uL2 family. In terms of assembly, part of the 50S ribosomal subunit. Forms a bridge to the 30S subunit in the 70S ribosome.

Functionally, one of the primary rRNA binding proteins. Required for association of the 30S and 50S subunits to form the 70S ribosome, for tRNA binding and peptide bond formation. It has been suggested to have peptidyltransferase activity; this is somewhat controversial. Makes several contacts with the 16S rRNA in the 70S ribosome. The chain is Large ribosomal subunit protein uL2 from Nocardia farcinica (strain IFM 10152).